Consider the following 82-residue polypeptide: Lectin-D2 (82 aa).

Chitin-binding type-1 domains follow at residues 1-42 (APEC…QCDY) and 43-82 (WRCG…SQCD). 4 disulfide bridges follow: C4-C19, C13-C25, C18-C32, and C36-C40. A carbohydrate is bound by residues S20, W22, Y24, and Y31. W43 provides a ligand contact to a carbohydrate. 4 disulfide bridges follow: C45–C60, C54–C66, C59–C73, and C77–C81. A carbohydrate-binding residues include S61, Y63, W65, and H72.

Monomer.

Functionally, N-acetyl-D-glucosamine binding lectin. Shows no hemagglutinating activity towards rabbit erythrocytes and weak activity towards trypsin-treated erythrocytes. Has mitogenic activity towards human peripheral blood lymphocytes (HPBL). The chain is Lectin-D2 from Phytolacca americana (American pokeweed).